Consider the following 1128-residue polypeptide: Membrane-associated guanylate kinase, WW and PDZ domain-containing protein 3 (1128 aa).

Positions 22-108 constitute a PDZ 1 domain; the sequence is WGGPAGPDPE…PVRLKTVRPG (87 aa). In terms of domain architecture, Guanylate kinase-like spans 116 to 290; that stretch reads RHYLSLQFQK…SMDFRNYMSR (175 aa). ATP is bound at residue 123-130; sequence FQKGSIDH. The interval 184 to 276 is disordered; it reads TYDGNFYGTP…DWMKPVPSYN (93 aa). The segment covering 193–204 has biased composition (pro residues); it reads PKPPAEPSPFQP. Acidic residues predominate over residues 238 to 247; sequence LPEDEEEEEK. Residues 257–267 are compositionally biased toward basic and acidic residues; the sequence is ENKEKHSDSSD. WW domains follow at residues 295–328 and 341–374; these read EPLP…DPRL and GELP…NPVL. PDZ domains follow at residues 412–494 and 581–657; these read RTSL…TLCR and TIPL…LILR. The disordered stretch occupies residues 658–688; it reads GGPPSPTKTGKMKDKQESSGSLEALSDAIPQ. 2 PDZ domains span residues 728–810 and 852–939; these read DVFL…TVRR and DVCL…VAEE. 2 disordered regions span residues 939–985 and 999–1018; these read EEHR…GKEV and LAQP…SQAQ. Polar residues-rich tracts occupy residues 946–956 and 965–974; these read SGTNSAKQSPA and AQSSASSTDR. The 83-residue stretch at 1024-1106 folds into the PDZ 6 domain; sequence PVELERGPRG…KVLLLLRPGT (83 aa).

The protein belongs to the MAGUK family.

The protein resides in the cell membrane. It is found in the cell junction. It localises to the tight junction. Functionally, acts as a scaffolding protein at cell-cell junctions, thereby regulating various cellular and signaling processes. This Gallus gallus (Chicken) protein is Membrane-associated guanylate kinase, WW and PDZ domain-containing protein 3 (MAGI3).